A 459-amino-acid chain; its full sequence is Argininosuccinate lyase (459 aa).

The protein belongs to the lyase 1 family. Argininosuccinate lyase subfamily.

Its subcellular location is the cytoplasm. The enzyme catalyses 2-(N(omega)-L-arginino)succinate = fumarate + L-arginine. The protein operates within amino-acid biosynthesis; L-arginine biosynthesis; L-arginine from L-ornithine and carbamoyl phosphate: step 3/3. The protein is Argininosuccinate lyase of Staphylococcus aureus (strain Mu3 / ATCC 700698).